A 642-amino-acid polypeptide reads, in one-letter code: Threonine--tRNA ligase (642 aa).

The TGS domain occupies 1–63; that stretch reads MNDITVTLPD…YNDARVVIVT (63 aa). The catalytic stretch occupies residues 242 to 533; it reads DHRKIGQELD…LIEHFNGKFP (292 aa). Cysteine 334, histidine 385, and histidine 510 together coordinate Zn(2+).

The protein belongs to the class-II aminoacyl-tRNA synthetase family. Homodimer. Requires Zn(2+) as cofactor.

It is found in the cytoplasm. The enzyme catalyses tRNA(Thr) + L-threonine + ATP = L-threonyl-tRNA(Thr) + AMP + diphosphate + H(+). Its function is as follows. Catalyzes the attachment of threonine to tRNA(Thr) in a two-step reaction: L-threonine is first activated by ATP to form Thr-AMP and then transferred to the acceptor end of tRNA(Thr). This is Threonine--tRNA ligase from Haloquadratum walsbyi (strain DSM 16790 / HBSQ001).